Here is a 502-residue protein sequence, read N- to C-terminus: MKRVQTAEEREREAKKLRLLEELEDTWLPYLTPKDDEFYQQWQLKYPKLVFREAGSIPEELHKEVPEAFLTLHKHGCLFRDLVRIQGKDVLTPVSRILIGDPGCTYKYLNTRLFTVPWPVKGCTINYTEAEIAAACQTFLKLNDYLQVETIQALEELAIKEKANEDAVPLCMAEFPRAGVGPSCDDEVDLKSRAAYNVTLLNFMDPQKMPYLKEEPYFGMGKMAVSWHHDENLVDRSAVAVYSYSCEGSEDESDDESSFEGRDPDTWHVGFKISWDIETPGLTIPLHQGDCYFMLDDLNATHQHCVLAGSQPRFSSTHRVAECSTGTLDYILQRCQLALQNVLNDSDNGDVSLKSFEPAVLKQGEEIHNEVEFEWLRQFWFQGNRYKICTDWWCEPMTQLEGLWKKMESVTNAVLREVKREGLSVEQRSEILSAVLIPLTMRQNLRKEWHARCQARVVRTLPAQQKPDCRPYWEKDDPSMPLPFDLTDVVSEIRSQLLEARS.

A fe2OG dioxygenase domain region spans residues 32-324 (TPKDDEFYQQ…SSTHRVAECS (293 aa)). Positions 96 and 108 each coordinate substrate. Residue Asn-202 coordinates 2-oxoglutarate. The loop L1; predicted to block binding of double-stranded DNA or RNA stretch occupies residues 210-221 (PYLKEEPYFGMG). At Lys-213 the chain carries N6-acetyllysine. 2 residues coordinate Fe cation: His-228 and Asp-230. Substrate is bound at residue 228 to 231 (HHDE). Residue Tyr-292 coordinates 2-oxoglutarate. His-304 serves as a coordination point for Fe cation. Residues 313–315 (RFS), Thr-317, and Arg-319 contribute to the 2-oxoglutarate site.

The protein belongs to the fto family. As to quaternary structure, monomer. May also exist as homodimer. Fe(2+) is required as a cofactor. As to expression, ubiquitous. Highly expressed in teeth and weakly in bone.

The protein localises to the nucleus. It is found in the nucleus speckle. The protein resides in the cytoplasm. The catalysed reaction is a 5'-end (N(7)-methyl 5'-triphosphoguanosine)-(N(6),2'-O-dimethyladenosine) in mRNA + 2-oxoglutarate + O2 = a 5'-end (N(7)-methyl 5'-triphosphoguanosine)-(2'-O-methyladenosine) in mRNA + formaldehyde + succinate + CO2. It catalyses the reaction an N(6)-methyladenosine in mRNA + 2-oxoglutarate + O2 = an adenosine in mRNA + formaldehyde + succinate + CO2. The enzyme catalyses N(6)-methyladenosine in U6 snRNA + 2-oxoglutarate + O2 = adenosine in U6 snRNA + formaldehyde + succinate + CO2. It carries out the reaction a 5'-end (N(7)-methyl 5'-triphosphoguanosine)-(N(6),2'-O-dimethyladenosine) in U6 snRNA + 2-oxoglutarate + O2 = a 5'-end (N(7)-methyl 5'-triphosphoguanosine)-(2'-O-methyladenosine) in U6 snRNA + formaldehyde + succinate + CO2. The catalysed reaction is an N(1)-methyladenosine in tRNA + 2-oxoglutarate + O2 = an adenosine in tRNA + formaldehyde + succinate + CO2. Its activity is regulated as follows. Activated by ascorbate. Inhibited by N-oxalylglycine, fumarate and succinate. Its function is as follows. RNA demethylase that mediates oxidative demethylation of different RNA species, such as mRNAs, tRNAs and snRNAs, and acts as a regulator of fat mass, adipogenesis and energy homeostasis. Specifically demethylates N(6)-methyladenosine (m6A) RNA, the most prevalent internal modification of messenger RNA (mRNA) in higher eukaryotes. M6A demethylation by FTO affects mRNA expression and stability. Also able to demethylate m6A in U6 small nuclear RNA (snRNA). Mediates demethylation of N(6),2'-O-dimethyladenosine cap (m6A(m)), by demethylating the N(6)-methyladenosine at the second transcribed position of mRNAs and U6 snRNA. Demethylation of m6A(m) in the 5'-cap by FTO affects mRNA stability by promoting susceptibility to decapping. Also acts as a tRNA demethylase by removing N(1)-methyladenine from various tRNAs. Has no activity towards 1-methylguanine. Has no detectable activity towards double-stranded DNA. Also able to repair alkylated DNA and RNA by oxidative demethylation: demethylates single-stranded RNA containing 3-methyluracil, single-stranded DNA containing 3-methylthymine and has low demethylase activity towards single-stranded DNA containing 1-methyladenine or 3-methylcytosine. Ability to repair alkylated DNA and RNA is however unsure in vivo. Involved in the regulation of fat mass, adipogenesis and body weight, thereby contributing to the regulation of body size and body fat accumulation. Involved in the regulation of thermogenesis and the control of adipocyte differentiation into brown or white fat cells. Regulates activity of the dopaminergic midbrain circuitry via its ability to demethylate m6A in mRNAs. This Rattus norvegicus (Rat) protein is Alpha-ketoglutarate-dependent dioxygenase FTO.